Consider the following 322-residue polypeptide: NADH-cytochrome b5 reductase 2 (322 aa).

A helical transmembrane segment spans residues 30–46; sequence LAPVYVAVGLAGLGVGL. The FAD-binding FR-type domain occupies 71–176; it reads QGWVNLKLSD…KGPLPKYPWE (106 aa). Position 179–214 (179–214) interacts with FAD; the sequence is KHKHICLVAGGTGITPMYQLAREIFKNPEDKTKVTL.

This sequence belongs to the flavoprotein pyridine nucleotide cytochrome reductase family. FAD serves as cofactor.

It localises to the mitochondrion outer membrane. The enzyme catalyses 2 Fe(III)-[cytochrome b5] + NADH = 2 Fe(II)-[cytochrome b5] + NAD(+) + H(+). Its function is as follows. May mediate the reduction of outer membrane cytochrome b5. This Emericella nidulans (strain FGSC A4 / ATCC 38163 / CBS 112.46 / NRRL 194 / M139) (Aspergillus nidulans) protein is NADH-cytochrome b5 reductase 2 (mcr1).